We begin with the raw amino-acid sequence, 279 residues long: Dihydropteroate synthase type-1 (279 aa).

One can recognise a Pterin-binding domain in the interval 1–258 (MVTVFGILNL…APGDLRSAIT (258 aa)). Residue asparagine 9 participates in Mg(2+) binding. Residues aspartate 82, asparagine 101, aspartate 173, lysine 212, and 246 to 248 (RTH) each bind (7,8-dihydropterin-6-yl)methyl diphosphate.

Belongs to the DHPS family. As to quaternary structure, homodimer or homotrimer. It depends on Mg(2+) as a cofactor.

The catalysed reaction is (7,8-dihydropterin-6-yl)methyl diphosphate + 4-aminobenzoate = 7,8-dihydropteroate + diphosphate. Its pathway is cofactor biosynthesis; tetrahydrofolate biosynthesis; 7,8-dihydrofolate from 2-amino-4-hydroxy-6-hydroxymethyl-7,8-dihydropteridine diphosphate and 4-aminobenzoate: step 1/2. In terms of biological role, catalyzes the condensation of para-aminobenzoate (pABA) with 6-hydroxymethyl-7,8-dihydropterin diphosphate (DHPt-PP) to form 7,8-dihydropteroate (H2Pte), the immediate precursor of folate derivatives. The polypeptide is Dihydropteroate synthase type-1 (sulI) (Corynebacterium glutamicum (Brevibacterium saccharolyticum)).